Here is a 540-residue protein sequence, read N- to C-terminus: [Co(II) methylated amine-specific corrinoid protein] reductase (540 aa).

2 consecutive 4Fe-4S ferredoxin-type domains span residues 471–500 (IILE…IVER) and 504–535 (RIAK…ITKL). [4Fe-4S] cluster is bound by residues C480, C483, C486, C490, C513, C518, C521, and C525.

Monomer. [4Fe-4S] cluster serves as cofactor.

It carries out the reaction 2 Co(II)-[methylamine-specific corrinoid protein] + AH2 + ATP + H2O = 2 Co(I)-[methylamine-specific corrinoid protein] + A + ADP + phosphate + 3 H(+). The catalysed reaction is 2 Co(II)-[dimethylamine-specific corrinoid protein] + AH2 + ATP + H2O = 2 Co(I)-[dimethylamine-specific corrinoid protein] + A + ADP + phosphate + 3 H(+). The enzyme catalyses 2 Co(II)-[trimethylamine-specific corrinoid protein] + AH2 + ATP + H2O = 2 Co(I)-[trimethylamine-specific corrinoid protein] + A + ADP + phosphate + 3 H(+). It functions in the pathway one-carbon metabolism; methanogenesis from methylamine. It participates in one-carbon metabolism; methanogenesis from dimethylamine. Its pathway is one-carbon metabolism; methanogenesis from trimethylamine. Its function is as follows. Reductase required for the activation of corrinoid-dependent methylamine methyltransferase reactions during methanogenesis. Mediates the ATP-dependent reduction of corrinoid proteins from the inactive cobalt(II) state to the active cobalt(I) state. Acts on the corrinoid proteins involved in methanogenesis from monomethylamine (MMA), dimethylamine (DMA) and trimethylamine (TMA), namely MtmC, MtbC and MttC, respectively. The chain is [Co(II) methylated amine-specific corrinoid protein] reductase from Methanosarcina barkeri.